Here is a 389-residue protein sequence, read N- to C-terminus: NAD-dependent protein deacetylase sirtuin-2 (389 aa).

Residues 1-34 (MAEPDPSDPLETQAGKVQEAQDSDSDTEGGATGG) are disordered. Ala-2 bears the N-acetylalanine mark. Residues Ser-23 and Ser-25 each carry the phosphoserine modification. At Thr-27 the chain carries Phosphothreonine. Residues 41–51 (LRNLFTQTLGL) carry the Nuclear export signal motif. Ser-53 is subject to Phosphoserine. A Deacetylase sirtuin-type domain is found at 57–338 (RLLDELTLEG…LALADLLGWK (282 aa)). NAD(+)-binding positions include 85 to 89 (AGIST) and 95 to 97 (DFR). Ser-100 bears the Phosphoserine mark. 167-170 (QNID) serves as a coordination point for NAD(+). His-187 (proton acceptor) is an active-site residue. Zn(2+) contacts are provided by Cys-195, Cys-200, Cys-221, and Cys-224. NAD(+) contacts are provided by residues 262-263 (TS), 286-288 (NKE), and Cys-324. The segment at 350–389 (ANIDAQSGSQAPNPSTTISPGKSPPPAKEAARTKEKEEQQ) is disordered. The span at 353 to 369 (DAQSGSQAPNPSTTISP) shows a compositional bias: polar residues. Ser-368 and Ser-372 each carry phosphoserine. Basic and acidic residues predominate over residues 378 to 389 (EAARTKEKEEQQ).

It belongs to the sirtuin family. Class I subfamily. As to quaternary structure, interacts with CDC20, FOXO3 and FZR1. Associates with microtubule in primary cortical mature neurons. Homotrimer. Interacts (via both phosphorylated, unphosphorylated, active or inactive forms) with HDAC6; the interaction is necessary for the complex to interact with alpha-tubulin, suggesting that these proteins belong to a large complex that deacetylates the cytoskeleton. Interacts with FOXO1; the interaction is disrupted upon serum-starvation or oxidative stress, leading to increased level of acetylated FOXO1 and induction of autophagy. Interacts with RELA; the interaction occurs in the cytoplasm and is increased in a TNF-alpha-dependent manner. Interacts with HOXA10; the interaction is direct. Interacts with YWHAB and YWHAG; the interactions occur in a AKT-dependent manner and increase SIRT2-dependent TP53 deacetylation. Interacts with MAPK1/ERK2 and MAPK3/ERK1; the interactions increase SIRT2 stability and deacetylation activity. Interacts (phosphorylated form) with KMT5A isoform 2; the interaction is direct, stimulates KMT5A-mediated methyltransferase activity on histone at 'Lys-20' (H4K20me1) and is increased in a H(2)O(2)-induced oxidative stress-dependent manner. Interacts with G6PD; the interaction is enhanced by H(2)O(2) treatment. Interacts with a G1/S-specific cyclin E-CDK2 complex. Interacts with AURKA, CDK5R1 (p35 form) and CDK5 and HIF1A. Interacts with the tRNA ligase SARS1; recruited to the VEGFA promoter via interaction with SARS1. Isoform 2 and isoform 4 associate with microtubules in primary cortical mature neurons. Interacts with BEX4; negatively regulates alpha-tubulin deacetylation by SIRT2. Requires Zn(2+) as cofactor. Post-translationally, phosphorylated at phosphoserine and phosphothreonine. Phosphorylated at Ser-368 by a mitotic kinase CDK1/cyclin B at the G2/M transition; phosphorylation regulates the delay in cell-cycle progression. Phosphorylated at Ser-368 by a mitotic kinase G1/S-specific cyclin E/Cdk2 complex; phosphorylation inactivates SIRT2-mediated alpha-tubulin deacetylation and thereby negatively regulates cell adhesion, cell migration and neurite outgrowth during neuronal differentiation. Phosphorylated by cyclin A/Cdk2 and p35-Cdk5 complexes and to a lesser extent by the cyclin D3/Cdk4 and cyclin B/Cdk1, in vitro. Dephosphorylated at Ser-368 by CDC14A and CDC14B around early anaphase. Acetylated by EP300; acetylation leads both to the decreased of SIRT2-mediated alpha-tubulin deacetylase activity and SIRT2-mediated down-regulation of TP53 transcriptional activity. In terms of processing, ubiquitinated. As to expression, isoform 1 is weakly expressed in the cortex at postnatal(P) days P1, P3 and P7, and increases progressively between P17 and older adult cortex. Isoform 1 is also expressed in heart, liver and skeletal muscle, weakly expressed in the striatum and spinal cord. Isoform 2 is not expressed in the cortex at P1, P3 and P7, and increases strongly and progressively between P17 and older adult cortex. Isoform 2 is also expressed in the heart, liver, striatum and spinal cord. Isoform 4 is weakly expressed in older adult cortex and spinal cords. Expressed in the cortex. Expressed in postnatal sciatic nerves during myelination and during remyelination after nerve injury. Expressed in neurons, oligodendrocytes, Schwann cells, Purkinje cells and in astrocytes of white matter. Strongly expressed in preadipocytes compared with differentiated adipocytes. Expressed in cerebellar granule cells. Expressed in the inner ear: in the cochlea, expressed in types I and V fibrocytes in the spiral ligament (SL) and slightly in stria vascularis (SV); in the organ of Corti, expressed in some supporting cells; in the crista ampullaris, expressed in spiral ganglion cells; also expressed in the endolymphatic sac (ES) epithelial cells (at protein level). Expressed in the brain, spinal cord, optic nerve and hippocampus. Strongly expressed in 6-8 week-old ovulated meiosis II oocytes and weakly expressed in 45-58 week-old ovulated meiosis II oocytes. Expressed in the cochlea, vestibule and acoustic nerve of the inner ear.

It is found in the nucleus. The protein resides in the cytoplasm. Its subcellular location is the perinuclear region. The protein localises to the perikaryon. It localises to the cytoskeleton. It is found in the cell projection. The protein resides in the growth cone. Its subcellular location is the myelin membrane. The protein localises to the microtubule organizing center. It localises to the centrosome. It is found in the spindle. The protein resides in the chromosome. Its subcellular location is the midbody. The protein localises to the centriole. The enzyme catalyses N(6)-acetyl-L-lysyl-[protein] + NAD(+) + H2O = 2''-O-acetyl-ADP-D-ribose + nicotinamide + L-lysyl-[protein]. It catalyses the reaction N(6)-tetradecanoyl-L-lysyl-[protein] + NAD(+) + H2O = 2''-O-tetradecanoyl-ADP-D-ribose + nicotinamide + L-lysyl-[protein]. It carries out the reaction N(6)-hexadecanoyl-L-lysyl-[protein] + NAD(+) + H2O = 2''-O-hexadecanoyl-ADP-D-ribose + nicotinamide + L-lysyl-[protein]. With respect to regulation, inhibited by Sirtinol, A3 and M15 small molecules. Inhibited by nicotinamide. Inhibited by a macrocyclic peptide inhibitor S2iL5. Inhibited by EP300-induced acetylation. NAD-dependent protein deacetylase, which deacetylates internal lysines on histone and alpha-tubulin as well as many other proteins such as key transcription factors. Participates in the modulation of multiple and diverse biological processes such as cell cycle control, genomic integrity, microtubule dynamics, cell differentiation, metabolic networks, and autophagy. Plays a major role in the control of cell cycle progression and genomic stability. Functions in the antephase checkpoint preventing precocious mitotic entry in response to microtubule stress agents, and hence allowing proper inheritance of chromosomes. Positively regulates the anaphase promoting complex/cyclosome (APC/C) ubiquitin ligase complex activity by deacetylating CDC20 and FZR1, then allowing progression through mitosis. Associates both with chromatin at transcriptional start sites (TSSs) and enhancers of active genes. Plays a role in cell cycle and chromatin compaction through epigenetic modulation of the regulation of histone H4 'Lys-20' methylation (H4K20me1) during early mitosis. Specifically deacetylates histone H4 at 'Lys-16' (H4K16ac) between the G2/M transition and metaphase enabling H4K20me1 deposition by KMT5A leading to ulterior levels of H4K20me2 and H4K20me3 deposition throughout cell cycle, and mitotic S-phase progression. Deacetylates KMT5A modulating KMT5A chromatin localization during the mitotic stress response. Also deacetylates histone H3 at 'Lys-57' (H3K56ac) during the mitotic G2/M transition. During oocyte meiosis progression, may deacetylate histone H4 at 'Lys-16' (H4K16ac) and alpha-tubulin, regulating spindle assembly and chromosome alignment by influencing microtubule dynamics and kinetochore function. Deacetylates histone H4 at 'Lys-16' (H4K16ac) at the VEGFA promoter and thereby contributes to regulate expression of VEGFA, a key regulator of angiogenesis. Deacetylates alpha-tubulin at 'Lys-40' and hence controls neuronal motility, oligodendroglial cell arbor projection processes and proliferation of non-neuronal cells. Phosphorylation at Ser-368 by a G1/S-specific cyclin E-CDK2 complex inactivates SIRT2-mediated alpha-tubulin deacetylation, negatively regulating cell adhesion, cell migration and neurite outgrowth during neuronal differentiation. Deacetylates PARD3 and participates in the regulation of Schwann cell peripheral myelination formation during early postnatal development and during postinjury remyelination. Involved in several cellular metabolic pathways. Plays a role in the regulation of blood glucose homeostasis by deacetylating and stabilizing phosphoenolpyruvate carboxykinase PCK1 activity in response to low nutrient availability. Acts as a key regulator in the pentose phosphate pathway (PPP) by deacetylating and activating the glucose-6-phosphate G6PD enzyme, and therefore, stimulates the production of cytosolic NADPH to counteract oxidative damage. Maintains energy homeostasis in response to nutrient deprivation as well as energy expenditure by inhibiting adipogenesis and promoting lipolysis. Attenuates adipocyte differentiation by deacetylating and promoting FOXO1 interaction to PPARG and subsequent repression of PPARG-dependent transcriptional activity. Plays a role in the regulation of lysosome-mediated degradation of protein aggregates by autophagy in neuronal cells. Deacetylates FOXO1 in response to oxidative stress or serum deprivation, thereby negatively regulating FOXO1-mediated autophagy. Deacetylates a broad range of transcription factors and co-regulators regulating target gene expression. Deacetylates transcriptional factor FOXO3 stimulating the ubiquitin ligase SCF(SKP2)-mediated FOXO3 ubiquitination and degradation. Deacetylates HIF1A and therefore promotes HIF1A degradation and inhibition of HIF1A transcriptional activity in tumor cells in response to hypoxia. Deacetylates RELA in the cytoplasm inhibiting NF-kappaB-dependent transcription activation upon TNF-alpha stimulation. Inhibits transcriptional activation by deacetylating p53/TP53 and EP300. Also deacetylates EIF5A. Functions as a negative regulator on oxidative stress-tolerance in response to anoxia-reoxygenation conditions. Plays a role as tumor suppressor. In addition to protein deacetylase activity, also has activity toward long-chain fatty acyl groups and mediates protein-lysine demyristoylation and depalmitoylation of target proteins, such as ARF6 and KRAS, thereby regulating their association with membranes. Its function is as follows. Deacetylates alpha-tubulin. In Mus musculus (Mouse), this protein is NAD-dependent protein deacetylase sirtuin-2 (Sirt2).